The chain runs to 110 residues: Thiosulfate sulfurtransferase GlpE (110 aa).

In terms of domain architecture, Rhodanese spans 19–107; it reads EDSLAVLVDI…WRRQALPIIQ (89 aa). Cys-67 acts as the Cysteine persulfide intermediate in catalysis.

Belongs to the GlpE family.

It is found in the cytoplasm. The catalysed reaction is thiosulfate + hydrogen cyanide = thiocyanate + sulfite + 2 H(+). The enzyme catalyses thiosulfate + [thioredoxin]-dithiol = [thioredoxin]-disulfide + hydrogen sulfide + sulfite + 2 H(+). Functionally, transferase that catalyzes the transfer of sulfur from thiosulfate to thiophilic acceptors such as cyanide or dithiols. May function in a CysM-independent thiosulfate assimilation pathway by catalyzing the conversion of thiosulfate to sulfite, which can then be used for L-cysteine biosynthesis. In Photobacterium profundum (strain SS9), this protein is Thiosulfate sulfurtransferase GlpE.